Consider the following 624-residue polypeptide: Chaperone protein HtpG (624 aa).

Residues 1–336 are a; substrate-binding; that stretch reads MKGQETRGFQ…SSDLSLNVSR (336 aa). The interval 337–552 is b; that stretch reads EILQDSTVTR…ADEMSTQMAK (216 aa). Residues 553 to 624 are c; that stretch reads LFAAAGQKVP…IRRMNQLLVS (72 aa).

This sequence belongs to the heat shock protein 90 family. In terms of assembly, homodimer.

The protein resides in the cytoplasm. Its function is as follows. Molecular chaperone. Has ATPase activity. In Shigella dysenteriae serotype 1 (strain Sd197), this protein is Chaperone protein HtpG.